A 544-amino-acid polypeptide reads, in one-letter code: CTP synthase (544 aa).

Residues 1–267 (MAKFVFITGG…CREVLDVLDL (267 aa)) are amidoligase domain. Serine 13 contacts CTP. Serine 13 is a binding site for UTP. Residues 14-19 (SIGKGI) and aspartate 71 contribute to the ATP site. 2 residues coordinate Mg(2+): aspartate 71 and glutamate 141. Residues 148–150 (DIE), 188–193 (KTKPTQ), and lysine 224 each bind CTP. UTP is bound by residues 188–193 (KTKPTQ) and lysine 224. The region spanning 292–534 (KVALVGKYIQ…IEAAQQRLPS (243 aa)) is the Glutamine amidotransferase type-1 domain. Glycine 354 serves as a coordination point for L-glutamine. Cysteine 381 serves as the catalytic Nucleophile; for glutamine hydrolysis. L-glutamine-binding positions include 382-385 (LGMQ), glutamate 405, and arginine 462. Active-site residues include histidine 507 and glutamate 509.

This sequence belongs to the CTP synthase family. In terms of assembly, homotetramer.

The catalysed reaction is UTP + L-glutamine + ATP + H2O = CTP + L-glutamate + ADP + phosphate + 2 H(+). It carries out the reaction L-glutamine + H2O = L-glutamate + NH4(+). It catalyses the reaction UTP + NH4(+) + ATP = CTP + ADP + phosphate + 2 H(+). It functions in the pathway pyrimidine metabolism; CTP biosynthesis via de novo pathway; CTP from UDP: step 2/2. Allosterically activated by GTP, when glutamine is the substrate; GTP has no effect on the reaction when ammonia is the substrate. The allosteric effector GTP functions by stabilizing the protein conformation that binds the tetrahedral intermediate(s) formed during glutamine hydrolysis. Inhibited by the product CTP, via allosteric rather than competitive inhibition. Catalyzes the ATP-dependent amination of UTP to CTP with either L-glutamine or ammonia as the source of nitrogen. Regulates intracellular CTP levels through interactions with the four ribonucleotide triphosphates. The chain is CTP synthase from Parasynechococcus marenigrum (strain WH8102).